We begin with the raw amino-acid sequence, 436 residues long: GTPase Der (436 aa).

EngA-type G domains are found at residues 3–168 (PLIA…PESD) and 177–352 (IRLA…QNRS). GTP is bound by residues 9–16 (GRPNVGKS), 56–60 (DTGGY), 120–123 (NKAE), 183–190 (GRPNVGKS), 230–234 (DTAGL), and 295–298 (NKWD). The KH-like domain maps to 353–436 (RKISTSALNR…VTISLRFMQK (84 aa)).

The protein belongs to the TRAFAC class TrmE-Era-EngA-EngB-Septin-like GTPase superfamily. EngA (Der) GTPase family. As to quaternary structure, associates with the 50S ribosomal subunit.

Its function is as follows. GTPase that plays an essential role in the late steps of ribosome biogenesis. In Chlorobium luteolum (strain DSM 273 / BCRC 81028 / 2530) (Pelodictyon luteolum), this protein is GTPase Der.